Consider the following 93-residue polypeptide: Aspartyl/glutamyl-tRNA(Asn/Gln) amidotransferase subunit C (93 aa).

The protein belongs to the GatC family. In terms of assembly, heterotrimer of A, B and C subunits.

The enzyme catalyses L-glutamyl-tRNA(Gln) + L-glutamine + ATP + H2O = L-glutaminyl-tRNA(Gln) + L-glutamate + ADP + phosphate + H(+). It carries out the reaction L-aspartyl-tRNA(Asn) + L-glutamine + ATP + H2O = L-asparaginyl-tRNA(Asn) + L-glutamate + ADP + phosphate + 2 H(+). Its function is as follows. Allows the formation of correctly charged Asn-tRNA(Asn) or Gln-tRNA(Gln) through the transamidation of misacylated Asp-tRNA(Asn) or Glu-tRNA(Gln) in organisms which lack either or both of asparaginyl-tRNA or glutaminyl-tRNA synthetases. The reaction takes place in the presence of glutamine and ATP through an activated phospho-Asp-tRNA(Asn) or phospho-Glu-tRNA(Gln). This is Aspartyl/glutamyl-tRNA(Asn/Gln) amidotransferase subunit C from Methanococcoides burtonii (strain DSM 6242 / NBRC 107633 / OCM 468 / ACE-M).